The following is a 42-amino-acid chain: Photosystem I reaction center subunit IX (42 aa).

Residues 7–27 form a helical membrane-spanning segment; it reads YLSAAPVLSTLWLGALAGLLI.

The protein belongs to the PsaJ family.

It is found in the plastid membrane. Its function is as follows. May help in the organization of the PsaE and PsaF subunits. The protein is Photosystem I reaction center subunit IX of Cuscuta exaltata (Tall dodder).